Here is a 291-residue protein sequence, read N- to C-terminus: Phosphatidylglycerol--prolipoprotein diacylglyceryl transferase (291 aa).

The next 7 helical transmembrane spans lie at 21-41 (VALHWYGLMYLVGFVFAMWLA), 60-80 (LLYAGFLGVFLGGRIGYVLFY), 96-116 (WDGGMSFHGGLIGVILVMIIF), 130-150 (FIAPLIPFGLGAGRLGNFING), 198-218 (SQLYELALEGVVLFIILNLFI), 225-245 (GAVSGLFLIGYGAFRIIVEFF), and 260-280 (ISMGQILSIPMIIAGAIMMVW). A 1,2-diacyl-sn-glycero-3-phospho-(1'-sn-glycerol) is bound at residue Arg-143.

The protein belongs to the Lgt family.

The protein resides in the cell inner membrane. The enzyme catalyses L-cysteinyl-[prolipoprotein] + a 1,2-diacyl-sn-glycero-3-phospho-(1'-sn-glycerol) = an S-1,2-diacyl-sn-glyceryl-L-cysteinyl-[prolipoprotein] + sn-glycerol 1-phosphate + H(+). It participates in protein modification; lipoprotein biosynthesis (diacylglyceryl transfer). Catalyzes the transfer of the diacylglyceryl group from phosphatidylglycerol to the sulfhydryl group of the N-terminal cysteine of a prolipoprotein, the first step in the formation of mature lipoproteins. The protein is Phosphatidylglycerol--prolipoprotein diacylglyceryl transferase of Salmonella agona (strain SL483).